The chain runs to 302 residues: Glycine--tRNA ligase alpha subunit (302 aa).

The protein belongs to the class-II aminoacyl-tRNA synthetase family. Tetramer of two alpha and two beta subunits.

The protein resides in the cytoplasm. It carries out the reaction tRNA(Gly) + glycine + ATP = glycyl-tRNA(Gly) + AMP + diphosphate. The chain is Glycine--tRNA ligase alpha subunit from Baumannia cicadellinicola subsp. Homalodisca coagulata.